The sequence spans 457 residues: uncharacterized protein (457 aa).

The TRAM domain occupies 10–69 (ALLQGQTVTVPITALAAGGDGIARLTDGRVLFVAGAVPGDTVEARLVHLKKDHGFGKILQ). Residues Cys-82, Cys-88, Cys-91, and Cys-170 each contribute to the [4Fe-4S] cluster site. Residues Gln-294, Tyr-323, Glu-344, and Asp-387 each contribute to the S-adenosyl-L-methionine site. Cys-414 functions as the Nucleophile in the catalytic mechanism.

The protein belongs to the class I-like SAM-binding methyltransferase superfamily. RNA M5U methyltransferase family.

This is an uncharacterized protein from Gloeobacter violaceus (strain ATCC 29082 / PCC 7421).